Consider the following 229-residue polypeptide: Heptaprenylglyceryl phosphate synthase (229 aa).

K12 is a sn-glycerol 1-phosphate binding site. Positions 14 and 40 each coordinate Mg(2+). Residues 159–164 (YLEYSG), G189, and 209–210 (GN) each bind sn-glycerol 1-phosphate.

Belongs to the GGGP/HepGP synthase family. Group I subfamily. As to quaternary structure, homodimer. Mg(2+) is required as a cofactor.

The enzyme catalyses sn-glycerol 1-phosphate + all-trans-heptaprenyl diphosphate = 3-heptaprenyl-sn-glycero-1-phosphate + diphosphate. It functions in the pathway membrane lipid metabolism; glycerophospholipid metabolism. Prenyltransferase that catalyzes in vivo the transfer of the heptaprenyl moiety of heptaprenyl pyrophosphate (HepPP; 35 carbon atoms) to the C3 hydroxyl of sn-glycerol-1-phosphate (G1P), producing heptaprenylglyceryl phosphate (HepGP). This reaction is an ether-bond-formation step in the biosynthesis of archaea-type G1P-based membrane lipids found in Bacillales. The chain is Heptaprenylglyceryl phosphate synthase from Bacillus velezensis (strain DSM 23117 / BGSC 10A6 / LMG 26770 / FZB42) (Bacillus amyloliquefaciens subsp. plantarum).